Consider the following 183-residue polypeptide: Caspase recruitment domain-containing protein 19 (183 aa).

An intrachain disulfide couples C7 to C77. The region spanning 8 to 99 (DRLVQDTPFL…PLHSHLPSRY (92 aa)) is the CARD domain. Residues 122–142 (GPMSFLAGLGLAAGLALLLYC) traverse the membrane as a helical segment.

As to quaternary structure, associates with BCL10 by CARD-CARD interaction.

It localises to the endoplasmic reticulum membrane. It is found in the mitochondrion membrane. Functionally, plays a role in inhibiting the effects of BCL10-induced activation of NF-kappa-B. The chain is Caspase recruitment domain-containing protein 19 from Mus musculus (Mouse).